Consider the following 301-residue polypeptide: MDPQQIKAALGSGLLSFPVTPFDAENRFAAAPYQKHVEWLSGFDAPVLFAAGGTGEFFSLTPDEIPAIVRAAKESAGKTAIVSGCGYGTEIARGIARSVEAAGGDGILLLPHYLIDAPQEGLYAHVKAVCQATGMGVMVYNRDNAVLQADTLARLCDDCPNLVGFKDGTGDIGLVRQITAKMGDRLTYLGGMPTAELFAEAYLGASFTTYSSAVFNFVPALANKFYAALRAGDRATCESILNSFFYPFMELRSRRKGYAVAAVKAGVRLVGFDAGPVRAPLSDLTGEEEEILKALIDAHRE.

Belongs to the DapA family.

It carries out the reaction 5-dehydro-4-deoxy-D-glucarate + H(+) = 2,5-dioxopentanoate + CO2 + H2O. It participates in carbohydrate acid metabolism; D-glucarate degradation; 2,5-dioxopentanoate from D-glucarate: step 2/2. This Cereibacter sphaeroides (strain ATCC 17029 / ATH 2.4.9) (Rhodobacter sphaeroides) protein is Probable 5-dehydro-4-deoxyglucarate dehydratase.